Here is a 930-residue protein sequence, read N- to C-terminus: G patch domain-containing protein TGH (930 aa).

Lys-25 participates in a covalent cross-link: Glycyl lysine isopeptide (Lys-Gly) (interchain with G-Cter in ubiquitin). The segment at Gly-76 to Asp-152 is disordered. Residues Ser-159 to Tyr-199 enclose the G-patch domain. One copy of the SURP motif repeat lies at Leu-405–Ala-447. Disordered stretches follow at residues Ala-478 to Gln-508, Arg-687 to Ala-751, and Phe-773 to Asp-930. The segment covering Pro-489 to Asp-498 has biased composition (basic and acidic residues). The span at Thr-499–Gln-508 shows a compositional bias: polar residues. Residues Ile-701 to Glu-711 are compositionally biased toward acidic residues. Residues Glu-779–Thr-808 show a composition bias toward basic and acidic residues. The span at Arg-848–Arg-857 shows a compositional bias: basic residues. The span at His-858 to Gly-877 shows a compositional bias: basic and acidic residues. Residues Arg-892–Ser-908 show a composition bias toward basic residues. Positions Ser-913–Arg-923 are enriched in basic and acidic residues.

In terms of tissue distribution, expressed in vasculature of cotyledons and leaves, young meristematic tissues, trichomes and pistils.

It is found in the nucleus speckle. The protein resides in the nucleus. Its subcellular location is the nucleoplasm. Functionally, functions as a component of microRNA (miRNA) and small interfering RNA (siRNA) biogenesis. May assist DCL1 and DCL4 to efficiently process and/or recruit the precursors of miRNAs and siRNAs. In the miRNA biogenesis pathway, associates with the DCL1 complex that processes primary miRNAs (pri-miRNAs) into miRNAs. Binds pri-miRNAs and precursor miRNAs (pre-miRNAs). Is required for the interaction between pri-miRNAs and DRB1. Required for general proper plant growth and, in particular, initiation of vascular development. Interacts genetically with AMP1, a glutamate carboxypeptidase involved in the regulation of meristem function. The polypeptide is G patch domain-containing protein TGH (Arabidopsis thaliana (Mouse-ear cress)).